The following is a 483-amino-acid chain: Glutarate-semialdehyde dehydrogenase (483 aa).

Residues 156-157, 180-183, and 233-234 each bind NADP(+); these read WN, KPAS, and GS. The active-site Proton acceptor is the glutamate 255. Leucine 256 serves as a coordination point for NADP(+). Cysteine 289 functions as the Nucleophile in the catalytic mechanism. Glutamate 386 provides a ligand contact to NADP(+).

The protein belongs to the aldehyde dehydrogenase family.

The catalysed reaction is 5-oxopentanoate + NADP(+) + H2O = glutarate + NADPH + 2 H(+). It functions in the pathway amino-acid degradation. Catalyzes the conversion of 5-oxopentanoate (glutarate semialdehyde) to glutarate. Involved in L-lysine degradation. The chain is Glutarate-semialdehyde dehydrogenase from Pseudomonas aeruginosa (strain ATCC 15692 / DSM 22644 / CIP 104116 / JCM 14847 / LMG 12228 / 1C / PRS 101 / PAO1).